Consider the following 429-residue polypeptide: Histidine--tRNA ligase (429 aa).

It belongs to the class-II aminoacyl-tRNA synthetase family. In terms of assembly, homodimer.

Its subcellular location is the cytoplasm. It carries out the reaction tRNA(His) + L-histidine + ATP = L-histidyl-tRNA(His) + AMP + diphosphate + H(+). The chain is Histidine--tRNA ligase from Streptococcus pneumoniae (strain JJA).